We begin with the raw amino-acid sequence, 63 residues long: MIVVPVKEGENIEKALKKFKRKFEKTGIVKELRSRQQFDKPSVTKRLKKERAVYVQKLQQVED.

This sequence belongs to the bacterial ribosomal protein bS21 family.

This chain is Small ribosomal subunit protein bS21, found in Bacteroides fragilis (strain ATCC 25285 / DSM 2151 / CCUG 4856 / JCM 11019 / LMG 10263 / NCTC 9343 / Onslow / VPI 2553 / EN-2).